Consider the following 217-residue polypeptide: TLD domain-containing protein 2 (217 aa).

The tract at residues 1–48 (MKSLRWRYTRLPSQVEDALSGEEDKEEEEEKEEETTPAPTPVPEHPMV) is disordered. Acidic residues predominate over residues 19–35 (LSGEEDKEEEEEKEEET). Residues 56 to 217 (QVLGASEMSQ…ISELEAWVLS (162 aa)) enclose the TLDc domain.

This sequence belongs to the OXR1 family.

The sequence is that of TLD domain-containing protein 2 (TLDC2) from Bos taurus (Bovine).